The following is a 208-amino-acid chain: Putative dioxygenase RC0543 (208 aa).

It belongs to the intradiol ring-cleavage dioxygenase family.

This Rickettsia conorii (strain ATCC VR-613 / Malish 7) protein is Putative dioxygenase RC0543.